Consider the following 314-residue polypeptide: tRNA(Ile)-lysidine synthase (314 aa).

Residue 37 to 42 participates in ATP binding; sequence SGGPDS.

This sequence belongs to the tRNA(Ile)-lysidine synthase family.

It is found in the cytoplasm. It carries out the reaction cytidine(34) in tRNA(Ile2) + L-lysine + ATP = lysidine(34) in tRNA(Ile2) + AMP + diphosphate + H(+). Functionally, ligates lysine onto the cytidine present at position 34 of the AUA codon-specific tRNA(Ile) that contains the anticodon CAU, in an ATP-dependent manner. Cytidine is converted to lysidine, thus changing the amino acid specificity of the tRNA from methionine to isoleucine. The protein is tRNA(Ile)-lysidine synthase of Corynebacterium glutamicum (strain ATCC 13032 / DSM 20300 / JCM 1318 / BCRC 11384 / CCUG 27702 / LMG 3730 / NBRC 12168 / NCIMB 10025 / NRRL B-2784 / 534).